The primary structure comprises 156 residues: Protein CURVATURE THYLAKOID 1C, chloroplastic (156 aa).

Residues 1-55 (MASISATLPSPLLLTQRKSNLTSIQKLPFSLTRGTNDLSPLSLTRNPSSISLMVK) constitute a chloroplast transit peptide. Over 56-83 (ASGESSDSSTDLDVVSTIQNVWDKSEDR) the chain is Stromal. The chain crosses the membrane as a helical span at residues 84–104 (LGLIGLGFAGIVALWASLNLI). Over 105–109 (TAIDK) the chain is Lumenal. The chain crosses the membrane as a helical span at residues 110–130 (LPVISSGFELVGILFSTWFTY). Residues 131–156 (RYLLFKPDRQELSKIVKKSVADILGQ) are Stromal-facing.

Belongs to the CURT family. Homo- and heterodimers and trimers. Interacts with PSAD2.

Its subcellular location is the plastid. The protein localises to the chloroplast thylakoid membrane. Determines thylakoid architecture by inducing membrane curvature. This Arabidopsis thaliana (Mouse-ear cress) protein is Protein CURVATURE THYLAKOID 1C, chloroplastic (CURT1C).